The following is a 214-amino-acid chain: Coiled-coil domain-containing protein 169 (214 aa).

Residues 30–144 (EMLQMSTFEL…IEQEAKAYYK (115 aa)) adopt a coiled-coil conformation. Residues 161-214 (VTQEAAKKQQSDPAHATREKPAFKAKYNGLAKRRTMTKRRGGMTKGSHPSNMKH) are disordered. Basic and acidic residues predominate over residues 165 to 182 (AAKKQQSDPAHATREKPA). A compositionally biased stretch (basic residues) spans 191 to 202 (AKRRTMTKRRGG).

It belongs to the CCDC169 family.

The sequence is that of Coiled-coil domain-containing protein 169 (ccdc169) from Xenopus laevis (African clawed frog).